The following is a 420-amino-acid chain: Calsequestrin-1 (420 aa).

Positions 1–22 are cleaved as a signal peptide; that stretch reads MKGPWLVLAALCLSLANLGPRG. The N-linked (GlcNAc...) asparagine glycan is linked to asparagine 338. The disordered stretch occupies residues 369–420; that stretch reads LEGEVNTEDDDDDDDDDDDDDDDDDDDDDDDDDDDDDDDDDDDDDDDDDDDD.

Belongs to the calsequestrin family. In terms of assembly, monomer; increases in response to a depletion of intracellular calcium. Homodimer. Homotetramer and homopolymer. Can form linear homooligomers. Ca(2+) ions promote oligomerization. In terms of tissue distribution, detected in skeletal muscle (at protein level). Detected in skeletal muscle.

The protein resides in the endoplasmic reticulum. It is found in the sarcoplasmic reticulum. It localises to the sarcoplasmic reticulum lumen. Its subcellular location is the sarcoplasmic reticulum membrane. The protein localises to the mitochondrion matrix. In terms of biological role, calsequestrin is a high-capacity, moderate affinity, calcium-binding protein and thus acts as an internal calcium store in muscle. Calcium ions are bound by clusters of acidic residues at the protein surface, often at the interface between subunits. Can bind around 80 Ca(2+) ions. Regulates the release of lumenal Ca(2+) via the calcium release channel RYR1; this plays an important role in triggering muscle contraction. Negatively regulates store-operated Ca(2+) entry (SOCE) activity. In Pelophylax lessonae (Pool frog), this protein is Calsequestrin-1.